The following is a 525-amino-acid chain: Transmembrane protein 184C (525 aa).

7 consecutive transmembrane segments (helical) span residues Leu17 to Phe37, Ser48 to Leu68, Ile83 to Tyr103, Val121 to Ile141, Tyr212 to Tyr232, Val254 to Ile274, and Ala287 to Ala307. Disordered regions lie at residues Pro358–Gly394 and Leu483–Pro525. Over residues Ser373 to Ser388 the composition is skewed to low complexity. Over residues Leu483–Gln502 the composition is skewed to polar residues. Low complexity predominate over residues Glu503 to Pro525.

It belongs to the TMEM184 family.

It is found in the membrane. In terms of biological role, possible tumor suppressor which may play a role in cell growth. This chain is Transmembrane protein 184C (Tmem184c), found in Mus musculus (Mouse).